The primary structure comprises 199 residues: Ras-related and estrogen-regulated growth inhibitor (199 aa).

Residues 13 to 20 (GRAGVGKS), 60 to 64 (DTAGQ), and 118 to 121 (NKAD) each bind GTP.

The protein belongs to the small GTPase superfamily. Ras family.

The protein localises to the cytoplasm. The catalysed reaction is GTP + H2O = GDP + phosphate + H(+). Binds GDP/GTP and possesses intrinsic GTPase activity. Has higher affinity for GDP than for GTP. The chain is Ras-related and estrogen-regulated growth inhibitor (RERG) from Bos taurus (Bovine).